The sequence spans 312 residues: Olfactory receptor 52A1 (312 aa).

At 1 to 27 (MSISNITVYMPSVLTLVGIPGLESVQC) the chain is on the extracellular side. The N-linked (GlcNAc...) asparagine glycan is linked to Asn5. Residues 28–48 (WIGIPFCAIYLIAMIGNSLLL) form a helical membrane-spanning segment. Topologically, residues 49–56 (SIIKSERS) are cytoplasmic. The chain crosses the membrane as a helical span at residues 57–77 (LHEPLYIFLGMLGATDIALAS). Residues 78–101 (SIMPKMLGIFWFNVPEIYFDSCLL) lie on the Extracellular side of the membrane. The cysteines at positions 99 and 182 are disulfide-linked. A helical transmembrane segment spans residues 102 to 122 (QMWFIHTLQGIESGILVAMAL). Residues 123–141 (DRYVAICYPLRHANIFTHQ) lie on the Cytoplasmic side of the membrane. A helical membrane pass occupies residues 142–162 (LVIQIGTMVVLRAAILVAPCL). Topologically, residues 163 to 199 (VLIKCRFQFYHTTVISHSYCEHMAIVKLAAANVQVNK) are extracellular. A helical membrane pass occupies residues 200–220 (IYGLFVAFTVAGFDLTFITLS). Residues 221 to 240 (YIQIFITVFRLPQKEARFKA) lie on the Cytoplasmic side of the membrane. Residues 241-261 (FNTCIAHICVFLQFYLLAFFS) traverse the membrane as a helical segment. Residues 262 to 276 (FFTHRFGSHISPYIH) lie on the Extracellular side of the membrane. Residues 277–297 (ILFSSIYLLVPPFLNPLVYGA) form a helical membrane-spanning segment. Residues 298–312 (KTTQIRIHVVKMFCS) lie on the Cytoplasmic side of the membrane.

This sequence belongs to the G-protein coupled receptor 1 family.

The protein localises to the cell membrane. Functionally, odorant receptor. The protein is Olfactory receptor 52A1 (OR52A1) of Homo sapiens (Human).